A 336-amino-acid polypeptide reads, in one-letter code: DNA-directed RNA polymerase subunit alpha (336 aa).

The tract at residues methionine 1–proline 235 is alpha N-terminal domain (alpha-NTD). The interval arginine 264 to glutamate 336 is alpha C-terminal domain (alpha-CTD).

It belongs to the RNA polymerase alpha chain family. As to quaternary structure, homodimer. The RNAP catalytic core consists of 2 alpha, 1 beta, 1 beta' and 1 omega subunit. When a sigma factor is associated with the core the holoenzyme is formed, which can initiate transcription.

The enzyme catalyses RNA(n) + a ribonucleoside 5'-triphosphate = RNA(n+1) + diphosphate. Functionally, DNA-dependent RNA polymerase catalyzes the transcription of DNA into RNA using the four ribonucleoside triphosphates as substrates. The chain is DNA-directed RNA polymerase subunit alpha from Thermotoga maritima (strain ATCC 43589 / DSM 3109 / JCM 10099 / NBRC 100826 / MSB8).